The chain runs to 132 residues: Small ribosomal subunit protein uS8 (132 aa).

It belongs to the universal ribosomal protein uS8 family. Part of the 30S ribosomal subunit. Contacts proteins S5 and S12.

In terms of biological role, one of the primary rRNA binding proteins, it binds directly to 16S rRNA central domain where it helps coordinate assembly of the platform of the 30S subunit. This is Small ribosomal subunit protein uS8 from Lacticaseibacillus casei (strain BL23) (Lactobacillus casei).